The chain runs to 448 residues: Protein king tubby (448 aa).

The interval 103-195 is disordered; the sequence is HELEDEESSP…NGTGGESEGD (93 aa). Over residues 118–133 the composition is skewed to low complexity; sequence QHQQSASHSANSTQSQ. S141 carries the phosphoserine modification. Residues 182-191 show a composition bias toward gly residues; the sequence is NGTGNGTGGE.

Belongs to the TUB family.

It localises to the cytoplasm. The protein resides in the nucleus. Its subcellular location is the cell projection. The protein localises to the cilium membrane. It is found in the rhabdomere. This chain is Protein king tubby, found in Drosophila erecta (Fruit fly).